Here is a 311-residue protein sequence, read N- to C-terminus: Phospholipid phosphatase 3 (311 aa).

The Cytoplasmic portion of the chain corresponds to 1 to 33 (MQNYKYDKAIVAESKNGGSPALNNNPRKGGSKR). Ser19 carries the phosphoserine modification. The helical transmembrane segment at 34 to 54 (VLLICLDLFCLFMAGLPFIII) threads the bilayer. Residues 55 to 85 (ETSTIKPYHRGFYCNDESIKYPQKTGETIND) lie on the Extracellular side of the membrane. The helical transmembrane segment at 86-106 (AVLTAVGIVIAILAIITGEFY) threads the bilayer. Topologically, residues 107 to 123 (RIYYLKEKSRSTIQNPY) are cytoplasmic. The short motif at 109–110 (YY) is the Dityrosine basolateral targeting motif element. A helical membrane pass occupies residues 124-144 (VAALYKQVGCFLFGCAISQSF). Residues 145-194 (TDIAKVSIGRLRPHFLNVCNPDFSQINCSVGYIQNYRCRGEDSKVQEARK) are Extracellular-facing. Residues 149-157 (KVSIGRLRP) form a phosphatase sequence motif I region. Asn171 is a glycosylation site (N-linked (GlcNAc...) asparagine). Positions 183–185 (RGE) match the Integrin-binding motif motif. A helical membrane pass occupies residues 195–215 (SFFSGHASFSMYTMLYLVLYL). The phosphatase sequence motif II stretch occupies residues 197–200 (FSGH). Residue His200 is the Proton donors of the active site. Residues 216 to 226 (QARFTWRGARL) lie on the Cytoplasmic side of the membrane. Residues 227-244 (LRPLLQFTLIMMAFYTGL) traverse the membrane as a helical segment. A phosphatase sequence motif III region spans residues 245–256 (SRVSDHKHHPSD). Residues 245–258 (SRVSDHKHHPSDVL) lie on the Extracellular side of the membrane. Catalysis depends on His252, which acts as the Nucleophile. Residues 259 to 279 (AGFAQGALVACCIVFFVSDLF) form a helical membrane-spanning segment. The interval 276–311 (SDLFKTKTTLSLPPSAIRKDMLSPVDIDRSNHHNMV) is mediates interaction with CTNND1. The Cytoplasmic segment spans residues 280–311 (KTKTTLSLPPSAIRKDMLSPVDIDRSNHHNMV).

The protein belongs to the PA-phosphatase related phosphoesterase family. In terms of assembly, forms functional homodimers and homooligomers that are not required for substrate recognition and catalytic activity. Can also form heterooligomers with other PLPP2 and PLPP3. Interacts with CTNND1; negatively regulates the PLPP3-mediated stabilization of beta-catenin/CTNNB1. N-glycosylated. Contains high-mannose oligosaccharides.

The protein resides in the cell membrane. Its subcellular location is the basolateral cell membrane. It is found in the endoplasmic reticulum membrane. It localises to the endoplasmic reticulum-Golgi intermediate compartment membrane. The protein localises to the golgi apparatus membrane. The protein resides in the golgi apparatus. Its subcellular location is the trans-Golgi network membrane. It is found in the membrane raft. It carries out the reaction a 1,2-diacyl-sn-glycero-3-phosphate + H2O = a 1,2-diacyl-sn-glycerol + phosphate. It catalyses the reaction 1,2-dihexadecanoyl-sn-glycero-3-phosphate + H2O = 1,2-dihexadecanoyl-sn-glycerol + phosphate. The enzyme catalyses 1,2-di-(9Z-octadecenoyl)-sn-glycero-3-phosphate + H2O = 1,2-di-(9Z-octadecenoyl)-sn-glycerol + phosphate. The catalysed reaction is a monoacyl-sn-glycero-3-phosphate + H2O = a monoacylglycerol + phosphate. It carries out the reaction (9Z)-octadecenoyl-sn-glycero-3-phosphate + H2O = (9Z-octadecenoyl)-glycerol + phosphate. It catalyses the reaction sphing-4-enine 1-phosphate + H2O = sphing-4-enine + phosphate. The enzyme catalyses an N-acylsphing-4-enine 1-phosphate + H2O = an N-acylsphing-4-enine + phosphate. The catalysed reaction is N-(octanoyl)-sphing-4-enine-1-phosphate + H2O = N-octanoylsphing-4-enine + phosphate. It carries out the reaction N-(9Z-octadecenoyl)-ethanolamine phosphate + H2O = N-(9Z-octadecenoyl) ethanolamine + phosphate. It functions in the pathway lipid metabolism; phospholipid metabolism. Magnesium-independent phospholipid phosphatase. Insensitive to N-ethylmaleimide. Inhibited by sphingosine, zinc ions and modestly by propanolol. Magnesium-independent phospholipid phosphatase of the plasma membrane that catalyzes the dephosphorylation of a variety of glycerolipid and sphingolipid phosphate esters including phosphatidate/PA, lysophosphatidate/LPA, diacylglycerol pyrophosphate/DGPP, sphingosine 1-phosphate/S1P and ceramide 1-phosphate/C1P. Also acts on N-oleoyl ethanolamine phosphate/N-(9Z-octadecenoyl)-ethanolamine phosphate, a potential physiological compound. Has both an extracellular and an intracellular phosphatase activity, allowing the hydrolysis and the cellular uptake of these bioactive lipid mediators from the milieu, regulating signal transduction in different cellular processes. Through the dephosphorylation of extracellular sphingosine-1-phosphate and the regulation of its extra- and intracellular availability, plays a role in vascular homeostasis, regulating endothelial cell migration, adhesion, survival, proliferation and the production of pro-inflammatory cytokines. By maintaining the appropriate levels of this lipid in the cerebellum, also ensure its proper development and function. Through its intracellular lipid phosphatase activity may act in early compartments of the secretory pathway, regulating the formation of Golgi to endoplasmic reticulum retrograde transport carriers. In terms of biological role, independently of this phosphatase activity may also function in the Wnt signaling pathway and the stabilization of beta-catenin/CTNNB1, thereby regulating cell proliferation, migration and differentiation in angiogenesis or yet in tumor growth. Also plays a role in integrin-mediated cell-cell adhesion in angiogenesis. The protein is Phospholipid phosphatase 3 of Bos taurus (Bovine).